Consider the following 67-residue polypeptide: Prokaryotic ubiquitin-like protein Pup (67 aa).

Residues 1-11 (MAGQEQQQPQS) are compositionally biased toward low complexity. A disordered region spans residues 1–47 (MAGQEQQQPQSRESEFEDDAPATPPAPGEAQASAATQGVDDLLDEID). Residues 25–61 (PAPGEAQASAATQGVDDLLDEIDGVLESNAEEFVRAF) form an ARC ATPase binding region. Gln-67 is subject to Deamidated glutamine. Residue Gln-67 forms an Isoglutamyl lysine isopeptide (Gln-Lys) (interchain with K-? in acceptor proteins) linkage.

This sequence belongs to the prokaryotic ubiquitin-like protein family. As to quaternary structure, strongly interacts with the proteasome-associated ATPase ARC through a hydrophobic interface; the interacting region of Pup lies in its C-terminal half. There is one Pup binding site per ARC hexamer ring. Post-translationally, is modified by deamidation of its C-terminal glutamine to glutamate by the deamidase Dop, a prerequisite to the subsequent pupylation process.

The protein operates within protein degradation; proteasomal Pup-dependent pathway. Its function is as follows. Protein modifier that is covalently attached to lysine residues of substrate proteins, thereby targeting them for proteasomal degradation. The tagging system is termed pupylation. This is Prokaryotic ubiquitin-like protein Pup from Arthrobacter sp. (strain FB24).